Here is a 310-residue protein sequence, read N- to C-terminus: Retrotransposon Gag-like protein 4 (310 aa).

The CCHC-type zinc-finger motif lies at 278–295 (QLCLYCSQSGHFTRDCLA).

In terms of biological role, involved in cognitive function in the brain, possibly via the noradrenergic system. The polypeptide is Retrotransposon Gag-like protein 4 (Homo sapiens (Human)).